The following is an 896-amino-acid chain: Protein translocase subunit SecA (896 aa).

Residues Gln-87, 105-109 (GEGKT), and Asp-507 each bind ATP. The disordered stretch occupies residues 853-879 (ESLSENDEASETQTFRRQEKKIGRNDP). Over residues 866 to 876 (TFRRQEKKIGR) the composition is skewed to basic and acidic residues. Zn(2+) is bound by residues Cys-880, Cys-882, Cys-891, and His-892.

It belongs to the SecA family. In terms of assembly, monomer and homodimer. Part of the essential Sec protein translocation apparatus which comprises SecA, SecYEG and auxiliary proteins SecDF-YajC and YidC. Requires Zn(2+) as cofactor.

It is found in the cell inner membrane. The protein localises to the cytoplasm. It catalyses the reaction ATP + H2O + cellular proteinSide 1 = ADP + phosphate + cellular proteinSide 2.. Its function is as follows. Part of the Sec protein translocase complex. Interacts with the SecYEG preprotein conducting channel. Has a central role in coupling the hydrolysis of ATP to the transfer of proteins into and across the cell membrane, serving both as a receptor for the preprotein-SecB complex and as an ATP-driven molecular motor driving the stepwise translocation of polypeptide chains across the membrane. The chain is Protein translocase subunit SecA from Legionella pneumophila subsp. pneumophila (strain Philadelphia 1 / ATCC 33152 / DSM 7513).